The following is a 137-amino-acid chain: Large ribosomal subunit protein uL16 (137 aa).

The protein belongs to the universal ribosomal protein uL16 family. As to quaternary structure, part of the 50S ribosomal subunit.

Binds 23S rRNA and is also seen to make contacts with the A and possibly P site tRNAs. This Afipia carboxidovorans (strain ATCC 49405 / DSM 1227 / KCTC 32145 / OM5) (Oligotropha carboxidovorans) protein is Large ribosomal subunit protein uL16.